The sequence spans 423 residues: Serine--tRNA ligase (423 aa).

231 to 233 (TAE) lines the L-serine pocket. 262–264 (RSE) contacts ATP. L-serine is bound at residue E285. Residue 349–352 (EISS) participates in ATP binding. S384 is an L-serine binding site.

Belongs to the class-II aminoacyl-tRNA synthetase family. Type-1 seryl-tRNA synthetase subfamily. As to quaternary structure, homodimer. The tRNA molecule binds across the dimer.

The protein resides in the cytoplasm. The enzyme catalyses tRNA(Ser) + L-serine + ATP = L-seryl-tRNA(Ser) + AMP + diphosphate + H(+). It carries out the reaction tRNA(Sec) + L-serine + ATP = L-seryl-tRNA(Sec) + AMP + diphosphate + H(+). It participates in aminoacyl-tRNA biosynthesis; selenocysteinyl-tRNA(Sec) biosynthesis; L-seryl-tRNA(Sec) from L-serine and tRNA(Sec): step 1/1. In terms of biological role, catalyzes the attachment of serine to tRNA(Ser). Is also able to aminoacylate tRNA(Sec) with serine, to form the misacylated tRNA L-seryl-tRNA(Sec), which will be further converted into selenocysteinyl-tRNA(Sec). This Acinetobacter baylyi (strain ATCC 33305 / BD413 / ADP1) protein is Serine--tRNA ligase.